The primary structure comprises 388 residues: Na(+)/H(+) antiporter NhaA (388 aa).

The next 12 membrane-spanning stretches (helical) occupy residues 14 to 34, 59 to 79, 95 to 115, 125 to 145, 154 to 174, 177 to 197, 200 to 220, 222 to 242, 257 to 277, 295 to 315, 328 to 348, and 362 to 382; these read TIGI…NSPL, LLLW…GLEI, TFPA…FASL, GWAI…SLLG, VFLM…IALF, TKLS…LFIM, MCVI…VSVL, SGVH…YRIN, GLHL…NAGV, IMLG…YLAV, LIQF…SLFI, and ADKL…YIVL.

This sequence belongs to the NhaA Na(+)/H(+) (TC 2.A.33) antiporter family.

The protein localises to the cell inner membrane. The catalysed reaction is Na(+)(in) + 2 H(+)(out) = Na(+)(out) + 2 H(+)(in). In terms of biological role, na(+)/H(+) antiporter that extrudes sodium in exchange for external protons. This chain is Na(+)/H(+) antiporter NhaA, found in Nitratiruptor sp. (strain SB155-2).